A 402-amino-acid chain; its full sequence is Sulfate adenylyltransferase (402 aa).

This sequence belongs to the sulfate adenylyltransferase family.

The enzyme catalyses sulfate + ATP + H(+) = adenosine 5'-phosphosulfate + diphosphate. The protein operates within sulfur metabolism; hydrogen sulfide biosynthesis; sulfite from sulfate: step 1/3. This Vesicomyosocius okutanii subsp. Calyptogena okutanii (strain HA) protein is Sulfate adenylyltransferase.